A 480-amino-acid chain; its full sequence is Porphobilinogen deaminase, chloroplastic (480 aa).

The transit peptide at 1 to 139 (MYCGRYETIG…VSGGRIWSLA (139 aa)) directs the protein to the chloroplast. Position 395 is an S-(dipyrrolylmethanemethyl)cysteine (C395).

Belongs to the HMBS family. Requires dipyrromethane as cofactor.

The protein resides in the plastid. It is found in the chloroplast. It catalyses the reaction 4 porphobilinogen + H2O = hydroxymethylbilane + 4 NH4(+). The protein operates within porphyrin-containing compound metabolism; protoporphyrin-IX biosynthesis; coproporphyrinogen-III from 5-aminolevulinate: step 2/4. It functions in the pathway porphyrin-containing compound metabolism; chlorophyll biosynthesis. Functionally, tetrapolymerization of the monopyrrole PBG into the hydroxymethylbilane pre-uroporphyrinogen in several discrete steps. The polypeptide is Porphobilinogen deaminase, chloroplastic (Euglena gracilis).